The sequence spans 86 residues: Anti-adapter protein IraP (86 aa).

Residues 1-42 (MKNLIAELLVKLAQKEEESKELVAQVEALEIVVTALLRQMAQ) are a coiled coil.

This sequence belongs to the IraP family. Interacts with RssB.

It is found in the cytoplasm. Its function is as follows. Inhibits RpoS proteolysis by regulating RssB activity, thereby increasing the stability of the sigma stress factor RpoS especially during phosphate starvation, but also in stationary phase and during nitrogen starvation. Its effect on RpoS stability is due to its interaction with RssB, which probably blocks the interaction of RssB with RpoS, and the consequent delivery of the RssB-RpoS complex to the ClpXP protein degradation pathway. This chain is Anti-adapter protein IraP, found in Enterobacter sp. (strain 638).